Reading from the N-terminus, the 59-residue chain is Sperm protamine P1-type (59 aa).

The interval 1–59 is disordered; sequence MARYRRNRSRSRSRRRRRRRGGRGGRRGRRRRRHGQRRRGRRGRERTRRRRRRRRRSSS.

The protein belongs to the protamine P1 family. As to expression, testis.

It is found in the nucleus. The protein resides in the chromosome. In terms of biological role, protamines substitute for histones in the chromatin of sperm during the haploid phase of spermatogenesis. They compact sperm DNA into a highly condensed, stable and inactive complex. This is Sperm protamine P1-type from Chrysemys picta bellii (Western painted turtle).